The sequence spans 468 residues: uncharacterized protein (468 aa).

The 59-residue stretch at 3–61 (TFANGMTLDVTVDALAPGGKAVCRHEGRVIFVDRGLPGQQLHVRLTTVRKRFAEAECLA) folds into the TRAM domain. The [4Fe-4S] cluster site is built by C74, C80, C83, and C162. 4 residues coordinate S-adenosyl-L-methionine: Q288, Y317, E338, and D389. C416 serves as the catalytic Nucleophile.

Belongs to the class I-like SAM-binding methyltransferase superfamily. RNA M5U methyltransferase family.

This is an uncharacterized protein from Nitratidesulfovibrio vulgaris (strain ATCC 29579 / DSM 644 / CCUG 34227 / NCIMB 8303 / VKM B-1760 / Hildenborough) (Desulfovibrio vulgaris).